Here is a 189-residue protein sequence, read N- to C-terminus: ATP synthase subunit delta (189 aa).

It belongs to the ATPase delta chain family. In terms of assembly, F-type ATPases have 2 components, F(1) - the catalytic core - and F(0) - the membrane proton channel. F(1) has five subunits: alpha(3), beta(3), gamma(1), delta(1), epsilon(1). F(0) has three main subunits: a(1), b(2) and c(10-14). The alpha and beta chains form an alternating ring which encloses part of the gamma chain. F(1) is attached to F(0) by a central stalk formed by the gamma and epsilon chains, while a peripheral stalk is formed by the delta and b chains.

The protein localises to the cell inner membrane. Its function is as follows. F(1)F(0) ATP synthase produces ATP from ADP in the presence of a proton or sodium gradient. F-type ATPases consist of two structural domains, F(1) containing the extramembraneous catalytic core and F(0) containing the membrane proton channel, linked together by a central stalk and a peripheral stalk. During catalysis, ATP synthesis in the catalytic domain of F(1) is coupled via a rotary mechanism of the central stalk subunits to proton translocation. In terms of biological role, this protein is part of the stalk that links CF(0) to CF(1). It either transmits conformational changes from CF(0) to CF(1) or is implicated in proton conduction. The sequence is that of ATP synthase subunit delta from Methylorubrum extorquens (strain CM4 / NCIMB 13688) (Methylobacterium extorquens).